A 215-amino-acid polypeptide reads, in one-letter code: Large ribosomal subunit protein uL4 (215 aa).

Residues 51–88 are disordered; that stretch reads KGMGEVSGTTKKPYRQKGTGNARQGSLRAPQFRTGGAV.

Belongs to the universal ribosomal protein uL4 family. As to quaternary structure, part of the 50S ribosomal subunit.

In terms of biological role, one of the primary rRNA binding proteins, this protein initially binds near the 5'-end of the 23S rRNA. It is important during the early stages of 50S assembly. It makes multiple contacts with different domains of the 23S rRNA in the assembled 50S subunit and ribosome. Forms part of the polypeptide exit tunnel. The polypeptide is Large ribosomal subunit protein uL4 (Granulibacter bethesdensis (strain ATCC BAA-1260 / CGDNIH1)).